The sequence spans 369 residues: tRNA/tmRNA (uracil-C(5))-methyltransferase (369 aa).

S-adenosyl-L-methionine-binding residues include Q190, Y218, N223, E239, and D301. C326 acts as the Nucleophile in catalysis. The active-site Proton acceptor is the E360.

It belongs to the class I-like SAM-binding methyltransferase superfamily. RNA M5U methyltransferase family. TrmA subfamily.

It carries out the reaction uridine(54) in tRNA + S-adenosyl-L-methionine = 5-methyluridine(54) in tRNA + S-adenosyl-L-homocysteine + H(+). The catalysed reaction is uridine(341) in tmRNA + S-adenosyl-L-methionine = 5-methyluridine(341) in tmRNA + S-adenosyl-L-homocysteine + H(+). Dual-specificity methyltransferase that catalyzes the formation of 5-methyluridine at position 54 (m5U54) in all tRNAs, and that of position 341 (m5U341) in tmRNA (transfer-mRNA). The chain is tRNA/tmRNA (uracil-C(5))-methyltransferase from Vibrio parahaemolyticus serotype O3:K6 (strain RIMD 2210633).